We begin with the raw amino-acid sequence, 410 residues long: Transforming growth factor beta-3 proprotein (410 aa).

The first 23 residues, Met1–Ser23, serve as a signal peptide directing secretion. N-linked (GlcNAc...) asparagine glycosylation is found at Asn72, Asn133, and Asn140. A Cell attachment site motif is present at residues Arg259–Asp261. N5-methylglutamine is present on Gln291. 4 disulfide bridges follow: Cys305-Cys314, Cys313-Cys376, Cys342-Cys407, and Cys346-Cys409.

The protein belongs to the TGF-beta family. As to quaternary structure, interacts with ASPN. Latency-associated peptide: Homodimer; disulfide-linked. Latency-associated peptide: Interacts with Transforming growth factor beta-3 (TGF-beta-3) chain; interaction is non-covalent and maintains (TGF-beta-3) in a latent state. Latency-associated peptide: Interacts with LRRC32/GARP; leading to regulate activation of TGF-beta-3 and promote epithelial fusion during palate development. Latency-associated peptide: Interacts (via cell attachment site) with integrins, leading to release of the active TGF-beta-3. Transforming growth factor beta-3: Homodimer; disulfide-linked. Transforming growth factor beta-3: Interacts with TGF-beta receptors (TGFBR1 and TGFBR2), leading to signal transduction. Post-translationally, transforming growth factor beta-3 proprotein: The precursor proprotein is cleaved in the Golgi apparatus to form Transforming growth factor beta-3 (TGF-beta-3) and Latency-associated peptide (LAP) chains, which remain non-covalently linked, rendering TGF-beta-3 inactive. In terms of processing, methylated at Gln-291 by N6AMT1. As to expression, expressed in mammary glands with a slight increase in expression prior to lactation and again increasing at the onset of involution, expression peaks at day 3 of involution.

The protein resides in the secreted. The protein localises to the extracellular space. It is found in the extracellular matrix. Functionally, transforming growth factor beta-3 proprotein: Precursor of the Latency-associated peptide (LAP) and Transforming growth factor beta-3 (TGF-beta-3) chains, which constitute the regulatory and active subunit of TGF-beta-3, respectively. Its function is as follows. Required to maintain the Transforming growth factor beta-3 (TGF-beta-3) chain in a latent state during storage in extracellular matrix. Associates non-covalently with TGF-beta-3 and regulates its activation via interaction with 'milieu molecules', such as LTBP1 and LRRC32/GARP, that control activation of TGF-beta-3. Interaction with integrins results in distortion of the Latency-associated peptide chain and subsequent release of the active TGF-beta-3. In terms of biological role, transforming growth factor beta-3: Multifunctional protein that regulates embryogenesis and cell differentiation and is required in various processes such as secondary palate development. Activation into mature form follows different steps: following cleavage of the proprotein in the Golgi apparatus, Latency-associated peptide (LAP) and Transforming growth factor beta-3 (TGF-beta-3) chains remain non-covalently linked rendering TGF-beta-3 inactive during storage in extracellular matrix. At the same time, LAP chain interacts with 'milieu molecules', such as LTBP1 and LRRC32/GARP that control activation of TGF-beta-3 and maintain it in a latent state during storage in extracellular milieus. TGF-beta-3 is released from LAP by integrins: integrin-binding results in distortion of the LAP chain and subsequent release of the active TGF-beta-3. Once activated following release of LAP, TGF-beta-3 acts by binding to TGF-beta receptors (TGFBR1 and TGFBR2), which transduce signal. This chain is Transforming growth factor beta-3 proprotein, found in Mus musculus (Mouse).